Consider the following 156-residue polypeptide: Small ribosomal subunit protein uS7 (156 aa).

Belongs to the universal ribosomal protein uS7 family. As to quaternary structure, part of the 30S ribosomal subunit. Contacts proteins S9 and S11.

One of the primary rRNA binding proteins, it binds directly to 16S rRNA where it nucleates assembly of the head domain of the 30S subunit. Is located at the subunit interface close to the decoding center, probably blocks exit of the E-site tRNA. The chain is Small ribosomal subunit protein uS7 from Parafrankia sp. (strain EAN1pec).